Consider the following 500-residue polypeptide: MSYFPWLTILVVLPIFAGSLIFFLPHRGNKIVRWYTISICLLEFLLMTYAFCYHFQLEDPLIQLKEDYKWIDILDFHWRLGIDGLSVGSILLTGFITTLATLAAWPVTRNSRLFYFLMLAMYSGQIGLFSSRDLLLFFIMWELELIPVYLLLSMWGGKRRLYSATKFILYTAGGSIFFLIGVLGMGLYGSNEPGLDLERLINQSYPTTLEILLYFGFLIAYAVKLPIIPLHTWLPDTHGEAHYSTCMLLAGILLKMGAYGLIRINMELLPHAHYLFSPWLVIIGAIQIIYAASTSLGQRNFKKRIAYSSVSHMGFIIIGIGSITNIGLNGAILQILSHGFIGATLFFLAGTASDRMRLVYLEELGGISIPMPKIFTMFSSFSMASLALPGMSGFVAELVVFFGLITSPKFLLMPKMLITFVMAIGMILTPIYLLSMLRQMFYGYKLFNVPNANFVDSGPRELFILICIFLPVIGIGIYPDLVLSLSVDRVEALLSNYYPK.

The next 14 membrane-spanning stretches (helical) occupy residues 4–24, 37–57, 87–107, 113–130, 134–154, 167–187, 211–231, 242–262, 272–292, 313–333, 334–354, 386–406, 417–437, and 462–482; these read FPWL…IFFL, ISIC…HFQL, VGSI…AWPV, LFYF…GLFS, LLLF…LLSM, FILY…GMGL, ILLY…IPLH, HYST…YGLI, AHYL…IYAA, MGFI…GAIL, QILS…TASD, LALP…GLIT, LITF…LSML, and LFIL…PDLV.

The protein belongs to the complex I subunit 4 family.

Its subcellular location is the plastid. The protein localises to the chloroplast thylakoid membrane. The catalysed reaction is a plastoquinone + NADH + (n+1) H(+)(in) = a plastoquinol + NAD(+) + n H(+)(out). It carries out the reaction a plastoquinone + NADPH + (n+1) H(+)(in) = a plastoquinol + NADP(+) + n H(+)(out). The protein is NAD(P)H-quinone oxidoreductase chain 4, chloroplastic of Agrostis stolonifera (Creeping bentgrass).